Consider the following 1105-residue polypeptide: uncharacterized protein (1105 aa).

Belongs to the mycobacterial PPE family.

This is an uncharacterized protein from Mycobacterium tuberculosis (strain CDC 1551 / Oshkosh).